Consider the following 666-residue polypeptide: Protein-arginine deiminase type-4 (666 aa).

Residues N153, D155, D165, D168, D176, and D179 each coordinate Ca(2+). 2 positions are modified to citrulline: R212 and R218. Residue Q349 coordinates Ca(2+). Residue D350 is part of the active site. Ca(2+) is bound by residues E351, E353, D369, and S370. A citrulline mark is found at R372, R374, and R383. Substrate is bound at residue R374. Ca(2+) is bound by residues F407, L410, and E411. Active-site residues include H471, D473, and C648.

The protein belongs to the protein arginine deiminase family. Ca(2+) is required as a cofactor. Autocitrullination at Arg-372 and Arg-374 inactivates the enzyme. Epidermis.

The protein localises to the cytoplasm. Its subcellular location is the nucleus. The protein resides in the cytoplasmic granule. The enzyme catalyses L-arginyl-[protein] + H2O = L-citrullyl-[protein] + NH4(+). Its function is as follows. Catalyzes the citrullination/deimination of arginine residues of proteins such as histones, thereby playing a key role in histone code and regulation of stem cell maintenance. Citrullinates histone H1 at 'Arg-54' (to form H1R54ci), histone H3 at 'Arg-2', 'Arg-8', 'Arg-17' and/or 'Arg-26' (to form H3R2ci, H3R8ci, H3R17ci, H3R26ci, respectively) and histone H4 at 'Arg-3' (to form H4R3ci). Acts as a key regulator of stem cell maintenance by mediating citrullination of histone H1: citrullination of 'Arg-54' of histone H1 (H1R54ci) results in H1 displacement from chromatin and global chromatin decondensation, thereby promoting pluripotency and stem cell maintenance. Promotes profound chromatin decondensation during the innate immune response to infection in neutrophils by mediating formation of H1R54ci. Required for the formation of neutrophil extracellular traps (NETs); NETs are mainly composed of DNA fibers and are released by neutrophils to bind pathogens during inflammation. Citrullination of histone H3 prevents their methylation by CARM1 and HRMT1L2/PRMT1 and represses transcription. Citrullinates EP300/P300 at 'Arg-2142', which favors its interaction with NCOA2/GRIP1. This Rattus norvegicus (Rat) protein is Protein-arginine deiminase type-4 (Padi4).